The primary structure comprises 332 residues: 2,3-diketo-L-gulonate reductase (332 aa).

His-44 serves as the catalytic Proton donor. NAD(+) contacts are provided by residues 168 to 174 (ITMVDMS), 224 to 225 (WK), and 304 to 306 (GHE).

This sequence belongs to the LDH2/MDH2 oxidoreductase family. DlgD subfamily. In terms of assembly, homodimer.

Its subcellular location is the cytoplasm. It catalyses the reaction 3-dehydro-L-gulonate + NAD(+) = 2,3-dioxo-L-gulonate + NADH + H(+). The catalysed reaction is 3-dehydro-L-gulonate + NADP(+) = 2,3-dioxo-L-gulonate + NADPH + H(+). Catalyzes the reduction of 2,3-diketo-L-gulonate in the presence of NADH, to form 3-keto-L-gulonate. The protein is 2,3-diketo-L-gulonate reductase of Klebsiella oxytoca.